A 405-amino-acid chain; its full sequence is Splicing factor 45 (405 aa).

Ser-2 is subject to N-acetylserine. Ser-2 bears the Phosphoserine mark. Residue Lys-15 forms a Glycyl lysine isopeptide (Lys-Gly) (interchain with G-Cter in SUMO2) linkage. Lys-21 bears the N6-acetyllysine mark. Glycyl lysine isopeptide (Lys-Gly) (interchain with G-Cter in SUMO2) cross-links involve residues Lys-24 and Lys-33. At Lys-41 the chain carries N6-acetyllysine; alternate. A Glycyl lysine isopeptide (Lys-Gly) (interchain with G-Cter in SUMO2); alternate cross-link involves residue Lys-41. Residues 57-68 (LKRGGSSDDRQI) show a composition bias toward basic and acidic residues. Disordered regions lie at residues 57 to 88 (LKRGGSSDDRQIADTPPHVAAGLKDPVPSGFS) and 114 to 233 (RQRE…FLAN). A Glycyl lysine isopeptide (Lys-Gly) (interchain with G-Cter in SUMO2) cross-link involves residue Lys-58. Position 71 is a phosphothreonine (Thr-71). Basic and acidic residues predominate over residues 114-153 (RQREERQRQRELERQKEIEEREKRRKDRHEASGFSRRPDP). Phosphoserine occurs at positions 155 and 169. Over residues 182 to 200 (VEKDKELPRDFPYEEDSRP) the composition is skewed to basic and acidic residues. Phosphoserine is present on Ser-222. One can recognise a G-patch domain in the interval 235–283 (GGTVAHKIMQKYGFREGQGLGKHEQGLSTALSVEKTSKRGGKIIVGDAT). At Thr-237 the chain carries Phosphothreonine. Lys-256 participates in a covalent cross-link: Glycyl lysine isopeptide (Lys-Gly) (interchain with G-Cter in SUMO2). Ser-266 is subject to Phosphoserine. Lys-276 is covalently cross-linked (Glycyl lysine isopeptide (Lys-Gly) (interchain with G-Cter in SUMO2)). Ser-295 and Ser-297 each carry phosphoserine. Residues 310–389 (VVLLRNMVGA…YFGGRVVKAC (80 aa)) enclose the RRM domain.

Binds SXL. Associates with the spliceosome. Interacts with SF3B1, SF1 and U2AF2.

Its subcellular location is the nucleus. Splice factor that binds to the single-stranded 3'AG at the exon/intron border and promotes its utilization in the second catalytic step. Involved in the regulation of alternative splicing and the utilization of cryptic splice sites. This chain is Splicing factor 45 (Rbm17), found in Mus musculus (Mouse).